A 273-amino-acid polypeptide reads, in one-letter code: 2,3,4,5-tetrahydropyridine-2,6-dicarboxylate N-succinyltransferase (273 aa).

2 residues coordinate substrate: Arg104 and Asp141.

It belongs to the transferase hexapeptide repeat family. In terms of assembly, homotrimer.

Its subcellular location is the cytoplasm. It catalyses the reaction (S)-2,3,4,5-tetrahydrodipicolinate + succinyl-CoA + H2O = (S)-2-succinylamino-6-oxoheptanedioate + CoA. It functions in the pathway amino-acid biosynthesis; L-lysine biosynthesis via DAP pathway; LL-2,6-diaminopimelate from (S)-tetrahydrodipicolinate (succinylase route): step 1/3. The protein is 2,3,4,5-tetrahydropyridine-2,6-dicarboxylate N-succinyltransferase of Nitrosomonas eutropha (strain DSM 101675 / C91 / Nm57).